Reading from the N-terminus, the 253-residue chain is (S)-2-haloacid dehalogenase (253 aa).

D8 acts as the Nucleophile in catalysis. An (S)-2-haloacid contacts are provided by residues 9–10, R39, and 114–115; these read AY and SN. Residues 171 to 176 form an important for catalytic activity region; that stretch reads SSNGFD.

This sequence belongs to the HAD-like hydrolase superfamily. S-2-haloalkanoic acid dehalogenase family. Homodimer.

It carries out the reaction an (S)-2-haloacid + H2O = a (2R)-2-hydroxycarboxylate + a halide anion + H(+). The enzyme catalyses (S)-2-chloropropanoate + H2O = (R)-lactate + chloride + H(+). Its function is as follows. Catalyzes the hydrolytic dehalogenation of small (S)-2-haloalkanoic acids to yield the corresponding (R)-2-hydroxyalkanoic acids. Acts on acids of short chain lengths, C(2) to C(4), with inversion of configuration at C-2. Active with 2-halogenated carboxylic acids and converts only the S-isomer (or L-isomer) of 2-chloropropionic acid with inversion of configuration to produce R-lactate (or D-isomer). The polypeptide is (S)-2-haloacid dehalogenase (Xanthobacter autotrophicus).